A 131-amino-acid polypeptide reads, in one-letter code: Cystatin-like cysteine protease inhibitor EPIC3 (131 aa).

The signal sequence occupies residues 1–22 (MAFTRSIALFAGLALAASSAQG). Asn33 carries an N-linked (GlcNAc...) asparagine glycan. Residues 71–75 (QTVAG) carry the Secondary area of contact motif.

Belongs to the cystatin family.

It is found in the secreted. In terms of biological role, secreted effector that interacts with and inhibits host apoplastic pathogenesis-related papain-like cysteine proteases. Inhibition of host proteases by a pathogen extracellular protease inhibitor forms a specific type of defense-counterdefense mechanism between plants and microbial pathogens. In Phytophthora infestans (strain T30-4) (Potato late blight agent), this protein is Cystatin-like cysteine protease inhibitor EPIC3.